Consider the following 144-residue polypeptide: NADH dehydrogenase [ubiquinone] 1 alpha subcomplex subunit 13 (144 aa).

N-acetylalanine is present on alanine 2. Residues 30-51 (LSGYSMLAIGIGTLIYGHWSIM) traverse the membrane as a helical segment. The interval 102-144 (PDWKVGESVFHTTRWVPPLIGELYGLRTTEEALHASHGFMWYT) is important for inducing cell death.

It belongs to the complex I NDUFA13 subunit family. Complex I is composed of 45 different subunits. Interacts with CARD15, but not with CARD4. Interacts with STAT3, but not with STAT1, STAT2 and STAT5A. Interacts with OLFM4. As to quaternary structure, (Microbial infection) Interacts with HHV-8 IRF1, in the nucleus, with HPV-16 E6 and SV40 LT. Widely expressed, with highest expression in heart, skeletal muscle, liver, kidney and placenta. In intestinal mucosa, down-regulated in areas involved in Crohn disease and ulcerative colitis.

It localises to the mitochondrion inner membrane. The protein localises to the nucleus. Its function is as follows. Accessory subunit of the mitochondrial membrane respiratory chain NADH dehydrogenase (Complex I), that is believed not to be involved in catalysis. Complex I functions in the transfer of electrons from NADH to the respiratory chain. The immediate electron acceptor for the enzyme is believed to be ubiquinone. Involved in the interferon/all-trans-retinoic acid (IFN/RA) induced cell death. This apoptotic activity is inhibited by interaction with viral IRF1. Prevents the transactivation of STAT3 target genes. May play a role in CARD15-mediated innate mucosal responses and serve to regulate intestinal epithelial cell responses to microbes. The sequence is that of NADH dehydrogenase [ubiquinone] 1 alpha subcomplex subunit 13 (NDUFA13) from Homo sapiens (Human).